Consider the following 384-residue polypeptide: Homoserine O-succinyltransferase (384 aa).

The AB hydrolase-1 domain maps to 51–361; it reads NAILICHALS…ETSQGHDAFL (311 aa). Residue Ser157 is the Nucleophile of the active site. Residue Arg227 participates in substrate binding. Catalysis depends on residues Asp324 and His357. Residue Asp358 coordinates substrate.

Belongs to the AB hydrolase superfamily. MetX family. In terms of assembly, homodimer.

The protein resides in the cytoplasm. It carries out the reaction L-homoserine + succinyl-CoA = O-succinyl-L-homoserine + CoA. The protein operates within amino-acid biosynthesis; L-methionine biosynthesis via de novo pathway; O-succinyl-L-homoserine from L-homoserine: step 1/1. Functionally, transfers a succinyl group from succinyl-CoA to L-homoserine, forming succinyl-L-homoserine. The polypeptide is Homoserine O-succinyltransferase (Alkalilimnicola ehrlichii (strain ATCC BAA-1101 / DSM 17681 / MLHE-1)).